The chain runs to 126 residues: DNA-directed RNA polymerase subunit omega (126 aa).

The protein belongs to the RNA polymerase subunit omega family. As to quaternary structure, the RNAP catalytic core consists of 2 alpha, 1 beta, 1 beta' and 1 omega subunit. When a sigma factor is associated with the core the holoenzyme is formed, which can initiate transcription.

It carries out the reaction RNA(n) + a ribonucleoside 5'-triphosphate = RNA(n+1) + diphosphate. Functionally, promotes RNA polymerase assembly. Latches the N- and C-terminal regions of the beta' subunit thereby facilitating its interaction with the beta and alpha subunits. This Rickettsia bellii (strain OSU 85-389) protein is DNA-directed RNA polymerase subunit omega.